Consider the following 428-residue polypeptide: Protein CANDIDATE G-PROTEIN COUPLED RECEPTOR 6 (428 aa).

The first 22 residues, 1–22 (MTILPFLAAVFVLQLLSTLTVA), serve as a signal peptide directing secretion. Asparagine 31, asparagine 89, and asparagine 157 each carry an N-linked (GlcNAc...) asparagine glycan. The next 7 helical transmembrane spans lie at 173–193 (LYLV…CFCW), 202–222 (IHLL…CAAV), 238–258 (IVFY…IVLI), 276–296 (LLVI…VIGE), 310–330 (IFFL…VWSM), 356–376 (FYVL…VMKM), and 385–405 (VSNA…FYMF).

This sequence belongs to the LU7TM family.

The protein resides in the membrane. In terms of biological role, G-protein coupled receptor. Plays a role in plants and microbes interactions. This Arabidopsis thaliana (Mouse-ear cress) protein is Protein CANDIDATE G-PROTEIN COUPLED RECEPTOR 6.